A 218-amino-acid polypeptide reads, in one-letter code: Non-structural protein NP-1 (218 aa).

Disordered stretches follow at residues 1–89 and 195–218; these read MSSG…RTNP and TESE…DASN. 2 stretches are compositionally biased toward basic residues: residues 8–18 and 27–40; these read DKHRAYKRKGS and PWQP…RSPI. Residues 58 to 67 are compositionally biased toward polar residues; it reads SHLSSCTASK. Over residues 73-86 the composition is skewed to basic and acidic residues; that stretch reads TKTKENTSGKRDSR. Positions 196 to 205 are enriched in acidic residues; sequence ESEEITDEEM.

Belongs to the Bocaparvovirus Non-structural protein NP-1 family.

It localises to the host nucleus. In terms of biological role, required for the expression of the capsid proteins. Performs the splicing and internal polyadenylation of the viral capsid-encoding mRNA precursor, which allows its maturation and expression. Transactivates the viral promoter. This is Non-structural protein NP-1 (NP1) from Human bocavirus 3 (HBoV3).